The sequence spans 839 residues: DNA (cytosine-5)-methyltransferase CMT3 (839 aa).

Disordered regions lie at residues 1-38 (MAPKRKRPATKDDTTKSIPKPKKRAPKRAKTVKEEPVT) and 51-86 (LDEPIPESEAKSTWPDRYKPIEVQPPKASSRKKTKD). Positions 19 to 30 (PKPKKRAPKRAK) are enriched in basic residues. The span at 51–70 (LDEPIPESEAKSTWPDRYKP) shows a compositional bias: basic and acidic residues. The BAH domain maps to 108 to 227 (QIYELNDDAY…LPYDTFEAIQ (120 aa)). Residues 269–813 (ATLLDLYSGC…YALGTAFQGL (545 aa)) enclose the SAM-dependent MTase C5-type domain. The Chromo domain maps to 382-447 (FTVDKIVGIS…LGYKSGILPL (66 aa)). Cys460 is a catalytic residue.

Belongs to the class I-like SAM-binding methyltransferase superfamily. C5-methyltransferase family. Homodimer. Interacts with HP1 and, through its chromodomain, with the N-terminal tail of histone H3 doubly methylated at 'Lys-9' and 'Lys-27'. Binds to JMJ24. Ubiquitinated by JMJ24, subsequently beingargeted to proteasomal degradation thus initiating the destabilization of the heterochromatic state of endogenous silenced loci.

It localises to the nucleus. It catalyses the reaction a 2'-deoxycytidine in DNA + S-adenosyl-L-methionine = a 5-methyl-2'-deoxycytidine in DNA + S-adenosyl-L-homocysteine + H(+). In terms of biological role, involved in the CpXpG methylation (e.g. CHG cytosine) and in gene silencing. Methylates preferentially transposon-related sequences. Functionally redundant to DRM1/DRM2 to maintain non-CpG methylation. Involved in RNA-directed DNA methylation. The sequence is that of DNA (cytosine-5)-methyltransferase CMT3 from Arabidopsis thaliana (Mouse-ear cress).